The sequence spans 468 residues: Maltose fermentation regulatory protein MAL33 (468 aa).

Positions 8 to 34 form a DNA-binding region, zn(2)-C6 fungal-type; it reads CDYCRVRRVKCDGKKPCSRCIEHNFDC. The short motif at 41-49 is the Nuclear localization signal element; that stretch reads KKRGSKPIG.

This sequence belongs to the MAL13 family.

The protein resides in the nucleus. In terms of biological role, regulates the coordinate transcription of structural MAL3S (maltase) and MAL3T (maltose permease) genes. The sequence is that of Maltose fermentation regulatory protein MAL33 (MAL33) from Saccharomyces cerevisiae (strain ATCC 204508 / S288c) (Baker's yeast).